The following is a 327-amino-acid chain: Ribose-phosphate pyrophosphokinase (327 aa).

ATP-binding positions include 40–42 (DGE) and 99–100 (RQ). Residues H134 and D173 each coordinate Mg(2+). K196 is a catalytic residue. D-ribose 5-phosphate contacts are provided by residues R198, D222, and 226–230 (DTANT).

Belongs to the ribose-phosphate pyrophosphokinase family. Class I subfamily. As to quaternary structure, homohexamer. The cofactor is Mg(2+).

Its subcellular location is the cytoplasm. It catalyses the reaction D-ribose 5-phosphate + ATP = 5-phospho-alpha-D-ribose 1-diphosphate + AMP + H(+). It functions in the pathway metabolic intermediate biosynthesis; 5-phospho-alpha-D-ribose 1-diphosphate biosynthesis; 5-phospho-alpha-D-ribose 1-diphosphate from D-ribose 5-phosphate (route I): step 1/1. In terms of biological role, involved in the biosynthesis of the central metabolite phospho-alpha-D-ribosyl-1-pyrophosphate (PRPP) via the transfer of pyrophosphoryl group from ATP to 1-hydroxyl of ribose-5-phosphate (Rib-5-P). In Chromobacterium violaceum (strain ATCC 12472 / DSM 30191 / JCM 1249 / CCUG 213 / NBRC 12614 / NCIMB 9131 / NCTC 9757 / MK), this protein is Ribose-phosphate pyrophosphokinase.